A 388-amino-acid chain; its full sequence is Carbamoyl phosphate synthase small chain (388 aa).

Residues Met-1–Ala-194 are CPSase. Positions 53, 246, and 248 each coordinate L-glutamine. Residues Lys-198–Glu-387 form the Glutamine amidotransferase type-1 domain. Cys-276 functions as the Nucleophile in the catalytic mechanism. Positions 277, 280, 318, 320, and 321 each coordinate L-glutamine. Residues His-360 and Glu-362 contribute to the active site.

The protein belongs to the CarA family. In terms of assembly, composed of two chains; the small (or glutamine) chain promotes the hydrolysis of glutamine to ammonia, which is used by the large (or ammonia) chain to synthesize carbamoyl phosphate. Tetramer of heterodimers (alpha,beta)4.

It catalyses the reaction hydrogencarbonate + L-glutamine + 2 ATP + H2O = carbamoyl phosphate + L-glutamate + 2 ADP + phosphate + 2 H(+). The enzyme catalyses L-glutamine + H2O = L-glutamate + NH4(+). The protein operates within amino-acid biosynthesis; L-arginine biosynthesis; carbamoyl phosphate from bicarbonate: step 1/1. Its pathway is pyrimidine metabolism; UMP biosynthesis via de novo pathway; (S)-dihydroorotate from bicarbonate: step 1/3. Small subunit of the glutamine-dependent carbamoyl phosphate synthetase (CPSase). CPSase catalyzes the formation of carbamoyl phosphate from the ammonia moiety of glutamine, carbonate, and phosphate donated by ATP, constituting the first step of 2 biosynthetic pathways, one leading to arginine and/or urea and the other to pyrimidine nucleotides. The small subunit (glutamine amidotransferase) binds and cleaves glutamine to supply the large subunit with the substrate ammonia. This Ruegeria pomeroyi (strain ATCC 700808 / DSM 15171 / DSS-3) (Silicibacter pomeroyi) protein is Carbamoyl phosphate synthase small chain.